A 254-amino-acid polypeptide reads, in one-letter code: L-erythrulose-1-phosphate isomerase (254 aa).

Histidine 97 (electrophile) is an active-site residue. The active-site Proton acceptor is glutamate 170. The substrate site is built by glycine 176 and serine 213.

This sequence belongs to the triosephosphate isomerase family. In terms of assembly, homodimer.

The protein resides in the cytoplasm. The enzyme catalyses L-erythrulose 1-phosphate = D-erythrulose 4-phosphate. The protein operates within carbohydrate metabolism; erythritol degradation. Its function is as follows. Catalyzes the isomerization of D-erythrulose-4P to L-erythrulose-1P. The polypeptide is L-erythrulose-1-phosphate isomerase (Mesorhizobium japonicum (strain LMG 29417 / CECT 9101 / MAFF 303099) (Mesorhizobium loti (strain MAFF 303099))).